The following is a 249-amino-acid chain: Vitamin B12 import ATP-binding protein BtuD (249 aa).

The ABC transporter domain occupies 1 to 233 (MSIVMQLQDV…PNLAQAYGMN (233 aa)). An ATP-binding site is contributed by 33–40 (GPNGAGKS).

The protein belongs to the ABC transporter superfamily. Vitamin B12 importer (TC 3.A.1.13.1) family. In terms of assembly, the complex is composed of two ATP-binding proteins (BtuD), two transmembrane proteins (BtuC) and a solute-binding protein (BtuF).

It localises to the cell inner membrane. It carries out the reaction an R-cob(III)alamin(out) + ATP + H2O = an R-cob(III)alamin(in) + ADP + phosphate + H(+). Part of the ABC transporter complex BtuCDF involved in vitamin B12 import. Responsible for energy coupling to the transport system. The polypeptide is Vitamin B12 import ATP-binding protein BtuD (Escherichia coli (strain K12 / DH10B)).